We begin with the raw amino-acid sequence, 345 residues long: Anthranilate phosphoribosyltransferase (345 aa).

5-phospho-alpha-D-ribose 1-diphosphate-binding positions include Gly-75, 78–79, Ser-83, 85–88, 103–111, and Gly-115; these read GD, NIST, and KHGNRAASS. Gly-75 is a binding site for anthranilate. Ser-87 is a Mg(2+) binding site. An anthranilate-binding site is contributed by Asn-106. Residue Arg-161 participates in anthranilate binding. The Mg(2+) site is built by Asp-219 and Glu-220.

This sequence belongs to the anthranilate phosphoribosyltransferase family. As to quaternary structure, homodimer. It depends on Mg(2+) as a cofactor.

It catalyses the reaction N-(5-phospho-beta-D-ribosyl)anthranilate + diphosphate = 5-phospho-alpha-D-ribose 1-diphosphate + anthranilate. It functions in the pathway amino-acid biosynthesis; L-tryptophan biosynthesis; L-tryptophan from chorismate: step 2/5. In terms of biological role, catalyzes the transfer of the phosphoribosyl group of 5-phosphorylribose-1-pyrophosphate (PRPP) to anthranilate to yield N-(5'-phosphoribosyl)-anthranilate (PRA). In Nocardia farcinica (strain IFM 10152), this protein is Anthranilate phosphoribosyltransferase.